Consider the following 90-residue polypeptide: Probable Fe(2+)-trafficking protein (90 aa).

It belongs to the Fe(2+)-trafficking protein family.

Could be a mediator in iron transactions between iron acquisition and iron-requiring processes, such as synthesis and/or repair of Fe-S clusters in biosynthetic enzymes. This Aeromonas salmonicida (strain A449) protein is Probable Fe(2+)-trafficking protein.